The sequence spans 353 residues: Tectonin-2 (353 aa).

The Ricin B-type lectin domain occupies 44-93 (WIFDNDGYIRLAANHNLVLDVNGGAAKEGNTVLSYPDKKDHAKNQLWVNK). A run of 6 repeats spans residues 138–173 (SAWE…HWDG), 174–210 (SKWH…DRGT), 211–247 (NKWS…NADS), 248–282 (NSWT…HYNG), 283–318 (NSWD…LKHG), and 319–353 (KDWE…KALL). The segment at 138–353 (SAWERHEGEL…SAHNIYKALL (216 aa)) is 6 X approximate tandem repeats.

The protein belongs to the tectonin family.

The protein localises to the cell surface. It is found in the cytoplasmic vesicle membrane. In terms of biological role, probably involved in bacterial recognition. May be a lectin that function as part of a transmembrane signaling complex during phagocytosis. The protein is Tectonin-2 (TECB) of Physarum polycephalum (Slime mold).